Reading from the N-terminus, the 125-residue chain is Large ribosomal subunit protein bL12 (125 aa).

This sequence belongs to the bacterial ribosomal protein bL12 family. As to quaternary structure, homodimer. Part of the ribosomal stalk of the 50S ribosomal subunit. Forms a multimeric L10(L12)X complex, where L10 forms an elongated spine to which 2 to 4 L12 dimers bind in a sequential fashion. Binds GTP-bound translation factors.

Its function is as follows. Forms part of the ribosomal stalk which helps the ribosome interact with GTP-bound translation factors. Is thus essential for accurate translation. This Rickettsia typhi (strain ATCC VR-144 / Wilmington) protein is Large ribosomal subunit protein bL12.